The sequence spans 206 residues: MNSEYDYLFKLLLIGNSGVGKSCLLLRFSDDTYTNDYISTIGVDFKIKTVELDGKTVKLQIWDTAGQERFRTITSSYYRGSHGIIIVYDVTDQESFNGVKMWLQEIDRYATSTVLKLLVGNKCDLKDKRVVEYDVAKEFADANKMPFLETSALDSTNVEDAFLTMARQIKESMSQQNLNETTQKKEDKGNVNLKGQSLTNTGGGCC.

The residue at position 1 (methionine 1) is an N-acetylmethionine. GTP-binding positions include 17-23 (SGVGKSC), 33-40 (YTNDYIST), glycine 66, and 121-124 (NKCD). The S-palmitoyl cysteine moiety is linked to residue cysteine 23. The Effector region signature appears at 37–45 (YISTIGVDF). Residues 63–80 (DTAGQERFRTITSSYYRG) are interaction with GDI1. Residue cysteine 123 is the site of S-palmitoyl cysteine attachment. Lysine 144 participates in a covalent cross-link: Glycyl lysine isopeptide (Lys-Gly) (interchain with G-Cter in ubiquitin). Position 152–153 (152–153 (AL)) interacts with GTP. Phosphoserine is present on residues serine 172 and serine 174. The disordered stretch occupies residues 173–206 (MSQQNLNETTQKKEDKGNVNLKGQSLTNTGGGCC). The segment at 189-195 (GNVNLKG) is interaction with GDI1. Residues cysteine 205 and cysteine 206 are each lipidated (S-geranylgeranyl cysteine).

Belongs to the small GTPase superfamily. Rab family. In terms of assembly, forms a complex with the Rab escort protein (REP) MRS6, which is recognized by Rab geranylgeranyltransferase BET2-BET4. Interacts with the Rab GDP dissociation inhibitor GDI1, which can retrieve from and deliver to membranes the GDP-bound and prenylated form of YPT1. Interacts with YIP1, which is required for proper membrane targeting of prenylated YPT1. Interacts with YIF1, YIP3, YIP4 and YIP5. Prenylation is required for interaction with GDI1 and YIP1.

The protein resides in the endoplasmic reticulum membrane. It localises to the golgi apparatus membrane. Its subcellular location is the cytoplasm. The protein localises to the preautophagosomal structure membrane. Its activity is regulated as follows. Rab activation is generally mediated by a guanine exchange factor (GEF), while inactivation through hydrolysis of bound GTP is catalyzed by a GTPase activating protein (GAP). YPT1 is activated by the GEFs DSS4 and TRAPP complex, and inactivated by GAPs GYP1, GYP5 and GYP8. Functionally, the small GTPases Rab are key regulators of intracellular membrane trafficking, from the formation of transport vesicles to their fusion with membranes. Rabs cycle between an inactive GDP-bound form and an active GTP-bound form that is able to recruit to membranes different set of downstream effectors directly responsible for vesicle formation, movement, tethering and fusion. YPT1 regulates the trafficking of secretory vesicles from the endoplasmic reticulum (ER) to the Golgi. Vesicular transport depends on shuttling of YPT1 between membrane and cytosol by GDI1, probably by recycling it to its membrane of origin after a vesicle fusion event. Plays a role in the initial events of the autophagic vacuole development which take place at specialized regions of the endoplasmic reticulum. Also involved in the recycling of membrane proteins. The chain is GTP-binding protein YPT1 (YPT1) from Saccharomyces cerevisiae (strain ATCC 204508 / S288c) (Baker's yeast).